The sequence spans 292 residues: Protease HtpX homolog (292 aa).

The next 2 helical transmembrane spans lie at Ile4–Leu24 and Ala42–Ser62. His147 lines the Zn(2+) pocket. Glu148 is an active-site residue. Residue His151 participates in Zn(2+) binding. Transmembrane regions (helical) follow at residues Val158 to Ile178 and Phe198 to Trp218. Glu224 is a binding site for Zn(2+).

Belongs to the peptidase M48B family. Zn(2+) is required as a cofactor.

The protein localises to the cell inner membrane. This chain is Protease HtpX homolog, found in Nitrosomonas eutropha (strain DSM 101675 / C91 / Nm57).